A 317-amino-acid polypeptide reads, in one-letter code: Beta-ketoacyl-[acyl-carrier-protein] synthase III (317 aa).

Active-site residues include Cys-112 and His-244. The interval 245–249 (QANLR) is ACP-binding. Asn-274 is a catalytic residue.

Belongs to the thiolase-like superfamily. FabH family. In terms of assembly, homodimer.

Its subcellular location is the cytoplasm. The enzyme catalyses malonyl-[ACP] + acetyl-CoA + H(+) = 3-oxobutanoyl-[ACP] + CO2 + CoA. The protein operates within lipid metabolism; fatty acid biosynthesis. In terms of biological role, catalyzes the condensation reaction of fatty acid synthesis by the addition to an acyl acceptor of two carbons from malonyl-ACP. Catalyzes the first condensation reaction which initiates fatty acid synthesis and may therefore play a role in governing the total rate of fatty acid production. Possesses both acetoacetyl-ACP synthase and acetyl transacylase activities. Its substrate specificity determines the biosynthesis of branched-chain and/or straight-chain of fatty acids. The protein is Beta-ketoacyl-[acyl-carrier-protein] synthase III of Shigella boydii serotype 4 (strain Sb227).